The chain runs to 178 residues: MSSRAEELILSLAKDLVGEDATELLKFLLRKRIEMTDDDIAKELNVKVNEIRKKLYLLSEQGFITYRKTRDKETGLFIYYWKVNIDQINELLLNRKRLVLEKLKARYEQEKDSLYYYCPQDNIQYNFDEALENEFKCPKCGSPLEYYDSEKTKKFLEYKIKQIENEIERETRHGSNSR.

Positions 5–89 (AEELILSLAK…YWKVNIDQIN (85 aa)) constitute an HTH TFE/IIEalpha-type domain.

Belongs to the TFE family. Monomer. Interaction with RNA polymerase subunits RpoF and RpoE is necessary for Tfe stimulatory transcription activity. Able to interact with Tbp and RNA polymerase in the absence of DNA promoter. Interacts both with the preinitiation and elongation complexes.

Its function is as follows. Transcription factor that plays a role in the activation of archaeal genes transcribed by RNA polymerase. Facilitates transcription initiation by enhancing TATA-box recognition by TATA-box-binding protein (Tbp), and transcription factor B (Tfb) and RNA polymerase recruitment. Not absolutely required for transcription in vitro, but particularly important in cases where Tbp or Tfb function is not optimal. It dynamically alters the nucleic acid-binding properties of RNA polymerases by stabilizing the initiation complex and destabilizing elongation complexes. Seems to translocate with the RNA polymerase following initiation and acts by binding to the non template strand of the transcription bubble in elongation complexes. In Sulfurisphaera tokodaii (strain DSM 16993 / JCM 10545 / NBRC 100140 / 7) (Sulfolobus tokodaii), this protein is Transcription factor E.